Reading from the N-terminus, the 161-residue chain is Regulator of ribonuclease activity A (161 aa).

Belongs to the RraA family. In terms of assembly, homotrimer. Binds to both RNA-binding sites in the C-terminal region of Rne and to RhlB.

It localises to the cytoplasm. Globally modulates RNA abundance by binding to RNase E (Rne) and regulating its endonucleolytic activity. Can modulate Rne action in a substrate-dependent manner by altering the composition of the degradosome. Modulates RNA-binding and helicase activities of the degradosome. This chain is Regulator of ribonuclease activity A, found in Shigella dysenteriae serotype 1 (strain Sd197).